We begin with the raw amino-acid sequence, 574 residues long: Sodium/hydrogen exchanger 8 (574 aa).

Transmembrane regions (helical) follow at residues 53 to 73, 77 to 97, 116 to 136, 149 to 169, 184 to 204, 254 to 274, 304 to 324, 347 to 367, 373 to 393, 410 to 430, and 444 to 464; these read MTIF…HLLI, LHFL…GAFI, PNMF…YSLH, LFSV…IYFL, FAFG…IFNA, LGYF…TGLI, GLAE…GIVM, VAFM…FSFP, SFVI…IFPL, MFIM…SLHL, and TTII…MPLI.

This sequence belongs to the monovalent cation:proton antiporter 1 (CPA1) transporter (TC 2.A.36) family.

The protein resides in the golgi apparatus membrane. Involved in pH regulation to eliminate acids generated by active metabolism or to counter adverse environmental conditions. Major proton extruding system driven by the inward sodium ion chemical gradient. Plays an important role in signal transduction. This is Sodium/hydrogen exchanger 8 from Gallus gallus (Chicken).